A 315-amino-acid chain; its full sequence is Zinc metalloproteinase nas-4 (315 aa).

A signal peptide spans 1 to 20 (MMTIQRYSLVFCAIFATCWT). The N-linked (GlcNAc...) asparagine glycan is linked to N71. Positions 95-290 (NAIKQIYRRW…RKINKLYNCP (196 aa)) constitute a Peptidase M12A domain. 2 cysteine pairs are disulfide-bonded: C137–C289 and C160–C179. H187 contacts Zn(2+). E188 is a catalytic residue. Zn(2+)-binding residues include H191 and H197. Residues 291-315 (GVSGNNNNNNNNQINSNSIVNHPQV) are disordered.

Zn(2+) serves as cofactor. Digestive tract. Found in the pharynx cells of the procorpus, metacorpus, isthmus and terminal bulb, and in the terminal bulb lumen.

The protein localises to the secreted. Its function is as follows. Metalloprotease. May be involved in digestion. The chain is Zinc metalloproteinase nas-4 (nas-4) from Caenorhabditis elegans.